The primary structure comprises 713 residues: Glycine--tRNA ligase beta subunit (713 aa).

This sequence belongs to the class-II aminoacyl-tRNA synthetase family. In terms of assembly, tetramer of two alpha and two beta subunits.

Its subcellular location is the cytoplasm. The enzyme catalyses tRNA(Gly) + glycine + ATP = glycyl-tRNA(Gly) + AMP + diphosphate. The polypeptide is Glycine--tRNA ligase beta subunit (Leptothrix cholodnii (strain ATCC 51168 / LMG 8142 / SP-6) (Leptothrix discophora (strain SP-6))).